A 437-amino-acid polypeptide reads, in one-letter code: Adenylyltransferase and sulfurtransferase MOCS3 (437 aa).

Residues Gly-82, Asp-103, 110-114, Lys-127, and 171-172 contribute to the ATP site; these read TNLHR and DN. Zn(2+)-binding residues include Cys-212 and Cys-215. The active-site Glycyl thioester intermediate; for adenylyltransferase activity is Cys-229. Zn(2+) is bound by residues Cys-287 and Cys-290. The Rhodanese domain occupies 337-435; it reads SNVPHLLVDV…WTHNIDPEFP (99 aa). The active-site Cysteine persulfide intermediate; for sulfurtransferase activity is the Cys-391.

In the N-terminal section; belongs to the HesA/MoeB/ThiF family. UBA4 subfamily. Zn(2+) serves as cofactor.

The protein resides in the cytoplasm. Its subcellular location is the cytosol. It catalyses the reaction [molybdopterin-synthase sulfur-carrier protein]-C-terminal Gly-Gly + ATP + H(+) = [molybdopterin-synthase sulfur-carrier protein]-C-terminal Gly-Gly-AMP + diphosphate. It carries out the reaction [molybdopterin-synthase sulfur-carrier protein]-C-terminal Gly-Gly-AMP + S-sulfanyl-L-cysteinyl-[cysteine desulfurase] + AH2 = [molybdopterin-synthase sulfur-carrier protein]-C-terminal-Gly-aminoethanethioate + L-cysteinyl-[cysteine desulfurase] + A + AMP + 2 H(+). It functions in the pathway tRNA modification; 5-methoxycarbonylmethyl-2-thiouridine-tRNA biosynthesis. It participates in cofactor biosynthesis; molybdopterin biosynthesis. Functionally, plays a central role in 2-thiolation of mcm(5)S(2)U at tRNA wobble positions of cytosolic tRNA(Lys), tRNA(Glu) and tRNA(Gln). Also essential during biosynthesis of the molybdenum cofactor. Acts by mediating the C-terminal thiocarboxylation of sulfur carriers URM1 and MOCS2A. Its N-terminus first activates URM1 and MOCS2A as acyl-adenylates (-COAMP), then the persulfide sulfur on the catalytic cysteine is transferred to URM1 and MOCS2A to form thiocarboxylation (-COSH) of their C-terminus. The reaction probably involves hydrogen sulfide that is generated from the persulfide intermediate and that acts as a nucleophile towards URM1 and MOCS2A. Subsequently, a transient disulfide bond is formed. Does not use thiosulfate as sulfur donor; NFS1 probably acting as a sulfur donor for thiocarboxylation reactions. The protein is Adenylyltransferase and sulfurtransferase MOCS3 of Aedes aegypti (Yellowfever mosquito).